Consider the following 65-residue polypeptide: Small ribosomal subunit protein bS21 (65 aa).

Belongs to the bacterial ribosomal protein bS21 family.

The sequence is that of Small ribosomal subunit protein bS21 from Flavobacterium psychrophilum (strain ATCC 49511 / DSM 21280 / CIP 103535 / JIP02/86).